A 492-amino-acid polypeptide reads, in one-letter code: BTB/POZ domain and ankyrin repeat-containing protein NOOT2 (492 aa).

Positions 25 to 107 (SDVTFQVEGR…LYSGQVSIVP (83 aa)) constitute a BTB domain. The segment at 113-127 (RPNCGERGCWHTHCT) adopts a C2HC NPR-type zinc-finger fold. Cysteine 116, cysteine 121, histidine 123, and cysteine 126 together coordinate Zn(2+). ANK repeat units follow at residues 248-277 (QKIR…LNLD), 278-307 (EALA…DVNY), 312-341 (AGKT…DPTV), and 345-379 (DGVT…KLRL). Disordered stretches follow at residues 395–439 (ENNA…NSIG) and 455–492 (TQMG…SHDF). Composition is skewed to low complexity over residues 397 to 413 (NASN…SSAA) and 425 to 439 (SSSS…NSIG). Over residues 461–473 (DDNRHNNSHREAM) the composition is skewed to basic and acidic residues.

Belongs to the plant 'ANKYRIN-BTB/POZ' family. 'NOOT-BOP-COCH-like' (NBCL) subfamily. Homodimer.

It is found in the nucleus. It localises to the cytoplasm. The protein localises to the cell membrane. It participates in protein modification; protein ubiquitination. Its function is as follows. May act as a substrate-specific adapter of an E3 ubiquitin-protein ligase complex (CUL3-RBX1-BTB) which mediates the ubiquitination and subsequent proteasomal degradation of target proteins. Transcriptional co-regulator involved in the promotion of leaf and floral meristem fate and determinacy. Required for the abscission of senescent organs, probably by regulating the cell wall disorganization in abscission zones (AZs, e.g. pulvini at the base of leaves). Involved in the coordination of the symbiotic nodule developmental program; promotes the formation of root nodules by interacting directly with APP1 to modulate the expression of the nuclear transcription factor Y subunit (NF-YA1), a key nodulin. Involved in the regulation of indeterminate nodule identity in association with NOOT1. The polypeptide is BTB/POZ domain and ankyrin repeat-containing protein NOOT2 (Medicago truncatula (Barrel medic)).